We begin with the raw amino-acid sequence, 370 residues long: Uroporphyrinogen decarboxylase (370 aa).

Residues 29–33, aspartate 79, tyrosine 155, serine 210, and histidine 342 each bind substrate; that span reads RQAGR.

It belongs to the uroporphyrinogen decarboxylase family. In terms of assembly, homodimer.

It localises to the cytoplasm. The catalysed reaction is uroporphyrinogen III + 4 H(+) = coproporphyrinogen III + 4 CO2. It participates in porphyrin-containing compound metabolism; protoporphyrin-IX biosynthesis; coproporphyrinogen-III from 5-aminolevulinate: step 4/4. Its function is as follows. Catalyzes the decarboxylation of four acetate groups of uroporphyrinogen-III to yield coproporphyrinogen-III. This chain is Uroporphyrinogen decarboxylase, found in Acidovorax sp. (strain JS42).